Consider the following 348-residue polypeptide: NADH-quinone oxidoreductase subunit H (348 aa).

Transmembrane regions (helical) follow at residues 10–30, 82–102, 115–135, 161–181, 199–219, 251–271, 287–307, and 322–342; these read LPFL…LVLV, GVFL…WAVI, VGLL…IMGG, IGFV…TTIV, FLDW…ISAL, LFFL…TILF, IPGV…FAIV, and LGWK…AAFL.

Belongs to the complex I subunit 1 family. As to quaternary structure, NDH-1 is composed of 14 different subunits. Subunits NuoA, H, J, K, L, M, N constitute the membrane sector of the complex.

It is found in the cell inner membrane. It carries out the reaction a quinone + NADH + 5 H(+)(in) = a quinol + NAD(+) + 4 H(+)(out). NDH-1 shuttles electrons from NADH, via FMN and iron-sulfur (Fe-S) centers, to quinones in the respiratory chain. The immediate electron acceptor for the enzyme in this species is believed to be ubiquinone. Couples the redox reaction to proton translocation (for every two electrons transferred, four hydrogen ions are translocated across the cytoplasmic membrane), and thus conserves the redox energy in a proton gradient. This subunit may bind ubiquinone. The chain is NADH-quinone oxidoreductase subunit H from Bartonella tribocorum (strain CIP 105476 / IBS 506).